Consider the following 892-residue polypeptide: Putative disease resistance protein At4g10780 (892 aa).

Residues 24–63 are a coiled coil; sequence SLGNYIHKLKDNIVALEKAIEDLTATRDDVLRRVQMEEGK. Residues 137–440 enclose the NB-ARC domain; that stretch reads IVAAPAPKLE…ICEGFIDGNI (304 aa). ATP is bound at residue 180-187; the sequence is GMGGVGKT. 6 LRR repeats span residues 515-536, 537-559, 562-584, 586-608, 609-631, and 632-654; these read AVRR…PECP, ELTT…FFRH, KLVV…ISEL, ALRY…QDLK, TLIH…SKLS, and SLRT…KELH.

This sequence belongs to the disease resistance NB-LRR family.

In terms of biological role, potential disease resistance protein. This chain is Putative disease resistance protein At4g10780, found in Arabidopsis thaliana (Mouse-ear cress).